The primary structure comprises 412 residues: Argininosuccinate synthase (412 aa).

ATP contacts are provided by residues Ala-10 to Ser-18 and Ala-36. L-citrulline contacts are provided by Tyr-87 and Ser-92. Phosphotyrosine is present on Tyr-87. N6-acetyllysine is present on Lys-112. Tyr-113 carries the post-translational modification Phosphotyrosine. An ATP-binding site is contributed by Ser-115–Asn-123. L-aspartate-binding residues include Thr-119, Asn-123, and Asp-124. Asn-123 contacts L-citrulline. Residue Arg-127 participates in L-citrulline binding. 2 positions are modified to N6-acetyllysine; by CLOCK: Lys-165 and Lys-176. Residues Ser-177 and Ser-180 each carry the phosphoserine modification. L-citrulline is bound by residues Ser-180 and Ser-189. At Thr-219 the chain carries Phosphothreonine. L-citrulline contacts are provided by Glu-270 and Tyr-282.

Belongs to the argininosuccinate synthase family. Type 1 subfamily. Homotetramer. Interacts with NMRAL1. Interacts with CLOCK; in a circadian manner. Forms tissue-specific complexes with ASL, SLC7A1, HSP90AA1 and nitric oxide synthase NOS1, NOS2 or NOS3; the complex regulates cell-autonomous L-arginine synthesis and citrulline recycling while channeling extracellular L-arginine to nitric oxide synthesis pathway. Post-translationally, acetylated by CLOCK in a circadian manner which negatively regulates its enzyme activity. Deacetylated by histone deacetylases.

It is found in the cytoplasm. The protein localises to the cytosol. The enzyme catalyses L-citrulline + L-aspartate + ATP = 2-(N(omega)-L-arginino)succinate + AMP + diphosphate + H(+). Its pathway is amino-acid biosynthesis; L-arginine biosynthesis; L-arginine from L-ornithine and carbamoyl phosphate: step 2/3. The protein operates within nitrogen metabolism; urea cycle; (N(omega)-L-arginino)succinate from L-aspartate and L-citrulline: step 1/1. One of the enzymes of the urea cycle, the metabolic pathway transforming neurotoxic amonia produced by protein catabolism into inocuous urea in the liver of ureotelic animals. Catalyzes the formation of arginosuccinate from aspartate, citrulline and ATP and together with ASL it is responsible for the biosynthesis of arginine in most body tissues. Indirectly, may be involved in the control of blood pressure. The sequence is that of Argininosuccinate synthase from Rattus norvegicus (Rat).